Consider the following 335-residue polypeptide: MAAQNNNKDVAALVEKITGLHAAIAKLPSLSPSPDVDALFTELVTACVPPSPVDVTKLGPEAQEMREGLIRLCSEAEGKLEAHYSDMLAAFDNPLDHLGIFPYYSNYINLSKLEYELLARYVRRHRPARVAFIGSGPLPFSSFVLAARHLPDTMFDNYDLCGAANDRASKLFRADTDVGARMSFHTADVADLASELAKYDVVFLAALVGMAAEDKAKVIAHLGAHMADGAALVVRSAHGARGFLYPIVDPQDIGRGGFEVLAVCHPDDDVVNSVIIAQKSKEVHADGLGSARGAGRQYARGTVPVVSPPCRFGEMVADVTQNHKRDEFANAEVAF.

It belongs to the nicotianamine synthase (NAS)-like family.

It carries out the reaction 3 S-adenosyl-L-methionine = nicotianamine + 3 S-methyl-5'-thioadenosine + 3 H(+). Functionally, synthesizes nicotianamine, a polyamine that is the first intermediate in the synthesis of the phytosiderophores of the mugineic acid type found in gramineae which serves as a sensor for the physiological iron status within the plant, and/or might be involved in the transport of iron. This chain is Probable nicotianamine synthase 3 (NAS3), found in Hordeum vulgare (Barley).